Here is a 372-residue protein sequence, read N- to C-terminus: Cyclic GMP-AMP synthase-like receptor (372 aa).

Residue Thr-68 coordinates GTP. Residues Ser-70 and 82 to 84 (EFD) each bind ATP. Residues Glu-82, Asp-84, and Asp-190 each coordinate Mg(2+). Residues Asp-190 and 236 to 243 (LVCAPYWE) contribute to the GTP site. Residues 240 to 243 (PYWE), Lys-261, and 274 to 278 (SYTIK) contribute to the ATP site.

The protein belongs to the mab-21 family. The cofactor is Mg(2+). Mn(2+) serves as cofactor.

The enzyme catalyses GTP + ATP = 3',2'-cGAMP + 2 diphosphate. It catalyses the reaction GTP + ATP = pppA(2'-5')pG + diphosphate. It carries out the reaction pppA(2'-5')pG = 3',2'-cGAMP + diphosphate. Its activity is regulated as follows. The enzyme activity is specifically activated by double-stranded RNA (dsRNA). In terms of biological role, nucleotidyltransferase that catalyzes the formation of cyclic GMP-AMP (3',2'-cGAMP) from ATP and GTP and plays a key role in innate immunity. Synthesizes 3',2'-cGAMP in a two-step reaction through production of the linear intermediate pppA(2'-5')pG. Acts as a key sensor of double-stranded RNA (dsRNA), the presence of dsRNA in the cytoplasm being a danger signal that triggers the immune responses. Directly binds dsRNA longer than 15 bp, activating the nucleotidyltransferase activity, leading to synthesis of 3',2'-cGAMP, a second messenger that binds to and activates Sting, thereby triggering the antiviral immune response via activation of the NF-kappa-B transcription factor Rel (Relish). The protein is Cyclic GMP-AMP synthase-like receptor of Drosophila eugracilis (Fruit fly).